The sequence spans 247 residues: Ribonuclease PH (247 aa).

Residues arginine 96 and 134-136 (GTR) contribute to the phosphate site.

Belongs to the RNase PH family. In terms of assembly, homohexameric ring arranged as a trimer of dimers.

The enzyme catalyses tRNA(n+1) + phosphate = tRNA(n) + a ribonucleoside 5'-diphosphate. Its function is as follows. Phosphorolytic 3'-5' exoribonuclease that plays an important role in tRNA 3'-end maturation. Removes nucleotide residues following the 3'-CCA terminus of tRNAs; can also add nucleotides to the ends of RNA molecules by using nucleoside diphosphates as substrates, but this may not be physiologically important. Probably plays a role in initiation of 16S rRNA degradation (leading to ribosome degradation) during starvation. The polypeptide is Ribonuclease PH (Tropheryma whipplei (strain TW08/27) (Whipple's bacillus)).